A 620-amino-acid polypeptide reads, in one-letter code: Chaperone protein HscA homolog (620 aa).

The protein belongs to the heat shock protein 70 family.

Chaperone involved in the maturation of iron-sulfur cluster-containing proteins. Has a low intrinsic ATPase activity which is markedly stimulated by HscB. The chain is Chaperone protein HscA homolog from Pseudomonas fluorescens (strain SBW25).